We begin with the raw amino-acid sequence, 570 residues long: MSYKMSRAAYANMFGPTVGDKVRLADTELFIEVEKDFTTYGEEVKFGGGKVIRDGMGQSQVSREGGAVDTVITNALIVDHWGIVKADIGLKDGRIAAIGKAGNPDTQPGVNIIVGPGTEAIAGEGKIVTAGGMDSHIHFICPQQIEEALMSGLTCMLGGGTGPAHGTLATTCTPGPWHIARMIEAADAFPMNLAFAGKGNASLPGALVEMVLGGATSLKLHEDWGTTPGAIDCCLSVADEYDVQVMIHTDTLNESGFVEDTIAAIKGRTIHAFHTEGAGGGHAPDIIKICGQPNVIPSSTNPTRPYTQNTLAEHLDMLMVCHHLSPSIPEDIAFAESRIRKETIAAEDILHDIGAFSIISSDSQAMGRVGEVAIRTWQTADKMKRQRGRLKEETGDNDNFRVRRYVAKYTINPAIAHGLSHEIGSLEVGKRADLVIWNPAFFGVKPDMVLLGGTIAAAPMGDPNASIPTPQPVHYRPMFGAYGRSRTNSSVTFVSQASLDAGLAGRLGVAKELVAVQNTRGGIGKASMIHNSLTPHIEVDPETYEVRADGVLLTCEPATVLPMAQRYFLF.

The region spanning 131–570 (GGMDSHIHFI…LPMAQRYFLF (440 aa)) is the Urease domain. The Ni(2+) site is built by H136, H138, and K219. K219 is modified (N6-carboxylysine). H221 serves as a coordination point for substrate. Ni(2+) is bound by residues H248 and H274. Residue H322 is the Proton donor of the active site. D362 lines the Ni(2+) pocket.

The protein belongs to the metallo-dependent hydrolases superfamily. Urease alpha subunit family. In terms of assembly, heterotrimer of UreA (gamma), UreB (beta) and UreC (alpha) subunits. Three heterotrimers associate to form the active enzyme. Ni cation is required as a cofactor. In terms of processing, carboxylation allows a single lysine to coordinate two nickel ions.

It localises to the cytoplasm. The catalysed reaction is urea + 2 H2O + H(+) = hydrogencarbonate + 2 NH4(+). It functions in the pathway nitrogen metabolism; urea degradation; CO(2) and NH(3) from urea (urease route): step 1/1. The chain is Urease subunit alpha from Sinorhizobium fredii (strain NBRC 101917 / NGR234).